A 118-amino-acid chain; its full sequence is Small ribosomal subunit protein uS13 (118 aa).

The tract at residues 95–118 (LPLRGQRTRTNARTRKGPRKAIKK) is disordered.

Belongs to the universal ribosomal protein uS13 family. As to quaternary structure, part of the 30S ribosomal subunit. Forms a loose heterodimer with protein S19. Forms two bridges to the 50S subunit in the 70S ribosome.

Functionally, located at the top of the head of the 30S subunit, it contacts several helices of the 16S rRNA. In the 70S ribosome it contacts the 23S rRNA (bridge B1a) and protein L5 of the 50S subunit (bridge B1b), connecting the 2 subunits; these bridges are implicated in subunit movement. Contacts the tRNAs in the A and P-sites. The protein is Small ribosomal subunit protein uS13 of Xylella fastidiosa (strain 9a5c).